The following is a 68-amino-acid chain: Conotoxin TsMMSK-021 (68 aa).

The first 20 residues, 1–20 (MMSKLGVLLTICLLLFPLTA), serve as a signal peptide directing secretion. The propeptide occupies 21 to 52 (VRLDGDQHTDRPADRMQDIATEQHPLFDPVKR). 3 disulfide bridges follow: Cys-53–Cys-66, Cys-54–Cys-62, and Cys-58–Cys-65. 4-hydroxyproline is present on Pro-64.

Belongs to the conotoxin M superfamily. As to expression, expressed by the venom duct.

The protein resides in the secreted. The chain is Conotoxin TsMMSK-021 from Conus tessulatus (Tessellate cone).